A 750-amino-acid polypeptide reads, in one-letter code: Photosystem I P700 chlorophyll a apoprotein A1 (750 aa).

The next 8 membrane-spanning stretches (helical) occupy residues 70–93, 156–179, 195–219, 291–309, 346–369, 385–411, 433–455, and 531–549; these read VFSA…FHGA, LYCT…FHYH, LNHH…HVSL, IAHH…GHMY, WHAQ…HHMY, LSLF…IFMV, AIIS…LYIH, and FLVH…LILL. [4Fe-4S] cluster contacts are provided by cysteine 573 and cysteine 582. 2 helical membrane-spanning segments follow: residues 589 to 610 and 664 to 686; these read HVFL…HFSW and LSAY…MFLF. Residue histidine 675 coordinates chlorophyll a'. Chlorophyll a contacts are provided by methionine 683 and tyrosine 691. Position 692 (tryptophan 692) interacts with phylloquinone. Residues 724 to 744 form a helical membrane-spanning segment; that stretch reads AVGVTHYLLGGIATTWAFFLA.

The protein belongs to the PsaA/PsaB family. As to quaternary structure, the PsaA/B heterodimer binds the P700 chlorophyll special pair and subsequent electron acceptors. PSI consists of a core antenna complex that captures photons, and an electron transfer chain that converts photonic excitation into a charge separation. The eukaryotic PSI reaction center is composed of at least 11 subunits. Requires P700 is a chlorophyll a/chlorophyll a' dimer, A0 is one or more chlorophyll a, A1 is one or both phylloquinones and FX is a shared 4Fe-4S iron-sulfur center. as cofactor.

Its subcellular location is the plastid. It is found in the chloroplast thylakoid membrane. It carries out the reaction reduced [plastocyanin] + hnu + oxidized [2Fe-2S]-[ferredoxin] = oxidized [plastocyanin] + reduced [2Fe-2S]-[ferredoxin]. Its function is as follows. PsaA and PsaB bind P700, the primary electron donor of photosystem I (PSI), as well as the electron acceptors A0, A1 and FX. PSI is a plastocyanin-ferredoxin oxidoreductase, converting photonic excitation into a charge separation, which transfers an electron from the donor P700 chlorophyll pair to the spectroscopically characterized acceptors A0, A1, FX, FA and FB in turn. Oxidized P700 is reduced on the lumenal side of the thylakoid membrane by plastocyanin. The protein is Photosystem I P700 chlorophyll a apoprotein A1 of Solanum bulbocastanum (Wild potato).